A 485-amino-acid chain; its full sequence is MAALMLQGTGSDVGKSVLVAGLCRALANRGLRVRPFKPQNMSNNAAVTIDGGEIGRAQALQALACRTPPHSDMNPVLLKPQADRTSQLIVHGRVRGTLGSGNFRAGRGALLPDVLESYGRLRRQCDIVIVEGAGSPAEINLRAGDIANMGFARAARVPVVLVGDIDRGGVIAAIVGTRTVIDAEDAAMIKGFVINKFRGDPALFDDGYRAIAERSGWPGLGVVPWLAAAARLPSEDAVILERRADAREGRRIVACPILPRIANFDDLDPLKQEPGVELLMVPPGQPIPAEAAIIVLPGSKATIADLAALRREGWDIDIKAHHRRGGLILGLCGGYQMLGTRIADPLGIEGAASEVEGLGLLDVTTELAPAKTLREVTGTAWNSPVAGYEMHMGATVGTDTARPFARIDGGGGEGAINAAGNVIGTYIHGLLASPALRSALLAKIGVAGNGRDHGADVDAALDDIAAELAIHIDIGALLRIAAHPV.

The 187-residue stretch at 250-436 folds into the GATase cobBQ-type domain; sequence RRIVACPILP…IHGLLASPAL (187 aa). Residue Cys-332 is the Nucleophile of the active site. His-428 is an active-site residue.

It belongs to the CobB/CobQ family. CobQ subfamily.

It participates in cofactor biosynthesis; adenosylcobalamin biosynthesis. Functionally, catalyzes amidations at positions B, D, E, and G on adenosylcobyrinic A,C-diamide. NH(2) groups are provided by glutamine, and one molecule of ATP is hydrogenolyzed for each amidation. The chain is Cobyric acid synthase from Sphingopyxis alaskensis (strain DSM 13593 / LMG 18877 / RB2256) (Sphingomonas alaskensis).